A 574-amino-acid chain; its full sequence is FAD-linked oxidoreductase penH (574 aa).

An N-terminal signal peptide occupies residues 1-25 (MLPRALTLSALLALLLAIYLALAPA). N-linked (GlcNAc...) asparagine glycosylation is found at Asn48, Asn107, Asn193, Asn368, and Asn385. Residues 121–305 (HQGRIPLYAA…VRVTMRTYPD (185 aa)) enclose the FAD-binding PCMH-type domain.

Belongs to the oxygen-dependent FAD-linked oxidoreductase family. The cofactor is FAD.

It carries out the reaction peniprequinolone + A = yaequinolone E + AH2. The protein operates within secondary metabolite biosynthesis. It participates in alkaloid biosynthesis. It functions in the pathway mycotoxin biosynthesis. FAD-linked oxidoreductase; part of the gene cluster that mediates the biosynthesis of penigequinolones, potent insecticidal alkaloids that contain a highly modified 10-carbon prenyl group. The first stage is catalyzed by the nonribosomal peptide synthetase penN that condenses anthranilic acid and O-methyl-L-tyrosine to produce 4'-methoxycyclopeptin. 4'-methoxycyclopeptin is then converted to 4'-methoxydehydrocyclopeptin by the ketoglutarate-dependent dioxygenase penM through dehydrogenation to form a double bond between C-alpha and C-beta of the O-methyltyrosine side chain. PenM also converts its first product methoxydehydrocyclopeptin to 4'-methoxycyclopenin. The following conversion of 4'methoxycyclopenin into 4'-methoxyviridicatin is catalyzed by the cyclopenase penL. 4'-methoxyviridicatin is the precursor of quinolone natural products, and is further converted to quinolinone B. The prenyltransferase penI then catalyzes the canonical Friedel-Crafts alkylation of quinolinone B with dimethylallyl cation to yield dimethylallyl quinolone, which is subjected to FAD-dependent dehydrogenation by the FAD-linked oxidoreductase penH to yield conjugated aryl diene. The delta(3') double bond then serves as the site of the second alkylation with DMAPP catalyzed by the prenyltransferase penG to yield a carbenium ion intermediate, which can be attacked by H(2)O to yield a styrenyl quinolone containing a C3'-hydroxyprenyl chain, or undergo cyclization to yield yaequinolones J1 and J2. The conversion of the styrenyl quinolone into the tetrahydrofuran-containing yaequinolone C is performed by the FAD-dependent monooxygenase penE and involves epoxidation of the terminal C7'-C8' olefin, followed by epoxide ring opening initiated by the C3' hydroxyl group. The predicted cysteine hydrolase penJ acts as an epoxide hydrolase that enhances the rate of the 5-exo-tet cyclization step, increasing the yield of yaequinolone C. PenF catalyzes the cationic rearrangement of the epoxide formed by penE (before ring opening to produce yaequinolone C) into yaequinolone D. Finally, the short-chain dehydrogenase/reductase (SDR)-like reductase penD, catalyzes both the dehydration of yaequinolone D and the reduction of the resulting oxonium to yield penigequinolone. This Penicillium thymicola protein is FAD-linked oxidoreductase penH.